The primary structure comprises 494 residues: Transcription factor SOX-9 (494 aa).

Disordered stretches follow at residues 1 to 66 (MNLL…ESDE) and 159 to 275 (ERLR…FRDV). The span at 27-42 (SDDSAGSPCPSGSGSD) shows a compositional bias: low complexity. Basic and acidic residues-rich tracts occupy residues 56–66 (GDPDLKKESDE) and 159–174 (ERLR…DYKY). A dimerization (DIM) region spans residues 63–103 (ESDEDKFPVCIREAVSQVLKGYDWTLVPMPVRVNGSSKNKP). The tract at residues 63-103 (ESDEDKFPVCIREAVSQVLKGYDWTLVPMPVRVNGSSKNKP) is PQA. Position 64 is a phosphoserine (serine 64). The segment at residues 105–173 (VKRPMNAFMV…QHKKDHPDYK (69 aa)) is a DNA-binding region (HMG box). At serine 181 the chain carries Phosphoserine. Residues 211 to 222 (SPQSSSSISEVH) show a composition bias toward low complexity. Residues 224–309 (PGEHSGQSQG…LPPNGHPGVP (86 aa)) are transactivation domain (TAM). 2 short sequence motifs (9aaTAD) span residues 277 to 286 (IGELSSDVIS) and 292 to 300 (DVNEFDQYL). The span at 326 to 337 (SSASSPAGAGHA) shows a compositional bias: low complexity. The tract at residues 326 to 402 (SSASSPAGAG…PQQQQQQQQQ (77 aa)) is disordered. Over residues 344 to 353 (PQPPQPPAQP) the composition is skewed to pro residues. The segment at 372-494 (RPHIKTEQLS…QPVYTQLTRP (123 aa)) is transactivation domain (TAC). Lysine 376 is covalently cross-linked (Glycyl lysine isopeptide (Lys-Gly) (interchain with G-Cter in SUMO)). Positions 378–387 (EQLSPSHYSE) are enriched in polar residues. Positions 388–402 (QQQHSPQQQQQQQQQ) are enriched in low complexity. The short motif at 445–453 (GGLYSTFTY) is the 9aaTAD 3 element. Residues 462–494 (YTPIADTSGVPSIPQTHSPQHWEQPVYTQLTRP) form a disordered region. The span at 470–494 (GVPSIPQTHSPQHWEQPVYTQLTRP) shows a compositional bias: polar residues.

As to quaternary structure, interacts with SNAI2; triggers neural crest delamination in a phosphorylation dependent manner. Interacts with UBE2I. Phosphorylated at Ser-181 in the developing neural tube. Phosphorylation at either Ser-64 or Ser-181 is required for sumoylation, but phosphorylation is not dependent on sumoylation. Sumoylation is enhanced by PKA. Phosphorylation is required for interaction with SNAI2 to trigger neural crest delamination and for an efficient trunk neural crest delamination, whereas sumoylation plays a less significant role. Phosphorylation and sumoylation are induced by BMP signaling pathway. Post-translationally, sumoylated at Lys-376; phosphorylation at either Ser-64 or Ser-181 is required for sumoylation. Sumoylation is induced by BMP signaling pathway.

It localises to the nucleus. Transcription factor that plays a key role in chondrocytes differentiation and skeletal development. Specifically binds the 5'-ACAAAG-3' DNA motif present in enhancers and super-enhancers and promotes expression of genes important for chondrogenesis, including COL2A1. Plays a central role in successive steps of chondrocyte differentiation. Absolutely required for precartilaginous condensation, the first step in chondrogenesis during which skeletal progenitors differentiate into prechondrocytes. Together with SOX5 and SOX6, required for overt chondrogenesis when condensed prechondrocytes differentiate into early stage chondrocytes, the second step in chondrogenesis. Later, required to direct hypertrophic maturation and block osteoblast differentiation of growth plate chondrocytes: maintains chondrocyte columnar proliferation, delays prehypertrophy and then prevents osteoblastic differentiation of chondrocytes. Also required for chondrocyte hypertrophy, both indirectly, by keeping the lineage fate of chondrocytes, and directly, by remaining present in upper hypertrophic cells. Low lipid levels are the main nutritional determinant for chondrogenic commitment of skeletal progenitor cells: when lipids levels are low, FOXO transcription factors promote expression of SOX9, which induces chondrogenic commitment and suppresses fatty acid oxidation. In addition to cartilage development, also acts as a regulator of proliferation and differentiation in epithelial stem/progenitor cells. In response to bone morphogenetic protein stimulus, phosphorylation is induced and then sumoylation, allowing cooperation with SNAI2 to trigger neural crest delamination. The chain is Transcription factor SOX-9 from Gallus gallus (Chicken).